The primary structure comprises 208 residues: Urease accessory protein UreE (208 aa).

The segment at 145–195 (AEAHGHGQAHAHDHHDHDHHDHGHDHAHHDHAHHDHAHDHHGHDHAHDHAH) is disordered.

The protein belongs to the UreE family.

The protein localises to the cytoplasm. Functionally, involved in urease metallocenter assembly. Binds nickel. Probably functions as a nickel donor during metallocenter assembly. This Azorhizobium caulinodans (strain ATCC 43989 / DSM 5975 / JCM 20966 / LMG 6465 / NBRC 14845 / NCIMB 13405 / ORS 571) protein is Urease accessory protein UreE.